Consider the following 442-residue polypeptide: Putative toxin YopC (442 aa).

This sequence in the C-terminal section; belongs to the MbcT/ParT/Res family. Forms a complex with cognate antitoxin YopB.

May be the toxic component of a type II toxin-antitoxin (TA) system. Neutralized by its cognate antitoxin YopB. This chain is Putative toxin YopC (yopC), found in Bacillus subtilis (strain 168).